The following is a 376-amino-acid chain: Mitogen-activated protein kinase 5 (376 aa).

Positions 43–329 (VPPIRPIGRG…VEEALCYPYL (287 aa)) constitute a Protein kinase domain. ATP-binding positions include 49-57 (IGRGAYGFV) and Lys72. Asp169 (proton acceptor) is an active-site residue. Thr201 is modified (phosphothreonine). Positions 201 to 203 (TEY) match the TXY motif. Phosphotyrosine is present on Tyr203. Residue Thr206 is modified to Phosphothreonine.

This sequence belongs to the protein kinase superfamily. CMGC Ser/Thr protein kinase family. MAP kinase subfamily. In terms of processing, autophosphorylated on threonine and tyrosine residues. Post-translationally, dually phosphorylated on Thr-201 and Tyr-203, which activates the enzyme.

The enzyme catalyses L-seryl-[protein] + ATP = O-phospho-L-seryl-[protein] + ADP + H(+). It catalyses the reaction L-threonyl-[protein] + ATP = O-phospho-L-threonyl-[protein] + ADP + H(+). Its activity is regulated as follows. Activated by threonine and tyrosine phosphorylation. Activated by the MAP kinase kinase MKK2. Activated by the MAP kinase kinase MKK6 in vitro. The sequence is that of Mitogen-activated protein kinase 5 (MPK5) from Arabidopsis thaliana (Mouse-ear cress).